Here is a 165-residue protein sequence, read N- to C-terminus: Cysteine and tyrosine-rich protein 1 (165 aa).

The N-terminal stretch at 1 to 29 is a signal peptide; the sequence is MDALRLPRRLGVLLWKVVLLFVYAEDCRA. The Extracellular segment spans residues 30–61; sequence QCGKDCRAYCCNGSTPHCCSYYAYIGSILSGT. The helical transmembrane segment at 62-82 threads the bilayer; that stretch reads AIAGIVFGIVFIMGVIAGIAI. Topologically, residues 83 to 165 are cytoplasmic; it reads CICMCMKNNR…SSSQNRICNN (83 aa). Positions 127 to 165 are disordered; sequence DLPPPYSPAPQASAQRSPPPPYPGNSRKYSSSQNRICNN. Polar residues predominate over residues 153-165; the sequence is RKYSSSQNRICNN.

Belongs to the CYYR1 family.

It is found in the membrane. The polypeptide is Cysteine and tyrosine-rich protein 1 (Cyyr1) (Rattus norvegicus (Rat)).